The following is a 365-amino-acid chain: 3-dehydroquinate synthase (365 aa).

NAD(+) contacts are provided by residues 69-74 (DGEKYK), 103-107 (GVIGD), 127-128 (TT), lysine 140, and lysine 149. Glutamate 182, histidine 245, and histidine 262 together coordinate Zn(2+).

This sequence belongs to the sugar phosphate cyclases superfamily. Dehydroquinate synthase family. Co(2+) is required as a cofactor. The cofactor is Zn(2+). NAD(+) serves as cofactor.

The protein localises to the cytoplasm. It carries out the reaction 7-phospho-2-dehydro-3-deoxy-D-arabino-heptonate = 3-dehydroquinate + phosphate. The protein operates within metabolic intermediate biosynthesis; chorismate biosynthesis; chorismate from D-erythrose 4-phosphate and phosphoenolpyruvate: step 2/7. Functionally, catalyzes the conversion of 3-deoxy-D-arabino-heptulosonate 7-phosphate (DAHP) to dehydroquinate (DHQ). The protein is 3-dehydroquinate synthase of Pseudomonas entomophila (strain L48).